The sequence spans 386 residues: S-(hydroxymethyl)glutathione dehydrogenase (386 aa).

Ser2 is subject to N-acetylserine. Residue Cys49 participates in Zn(2+) binding. His50 serves as a coordination point for NAD(+). Zn(2+) contacts are provided by His71, Glu72, Cys101, Cys104, Cys107, Cys115, and Cys179. Residues 204–209, Asp228, 300–302, and 325–327 each bind NAD(+); these read GCGTVG, IGV, and SAF.

Belongs to the zinc-containing alcohol dehydrogenase family. Class-III subfamily. Requires Zn(2+) as cofactor.

It localises to the cytoplasm. Its subcellular location is the mitochondrion. The enzyme catalyses a primary alcohol + NAD(+) = an aldehyde + NADH + H(+). The catalysed reaction is a secondary alcohol + NAD(+) = a ketone + NADH + H(+). It catalyses the reaction S-(hydroxymethyl)glutathione + NADP(+) = S-formylglutathione + NADPH + H(+). It carries out the reaction S-(hydroxymethyl)glutathione + NAD(+) = S-formylglutathione + NADH + H(+). The enzyme catalyses S-nitrosoglutathione + NADH + H(+) = S-(hydroxysulfenamide)glutathione + NAD(+). Functionally, oxidizes long-chain alcohols and, in the presence of glutathione, is able to oxidize formaldehyde. Is responsible for yeast resistance to formaldehyde. Also acts as a S-nitroso-glutathione reductase by catalyzing the NADH-dependent reduction of S-nitrosoglutathione, thereby regulating protein S-nitrosylation. The sequence is that of S-(hydroxymethyl)glutathione dehydrogenase (SFA1) from Saccharomyces cerevisiae (strain ATCC 204508 / S288c) (Baker's yeast).